Here is a 244-residue protein sequence, read N- to C-terminus: Probable 2-phosphosulfolactate phosphatase (244 aa).

Belongs to the ComB family. The cofactor is Mg(2+).

The enzyme catalyses (2R)-O-phospho-3-sulfolactate + H2O = (2R)-3-sulfolactate + phosphate. The chain is Probable 2-phosphosulfolactate phosphatase from Thermosynechococcus vestitus (strain NIES-2133 / IAM M-273 / BP-1).